The following is a 930-amino-acid chain: Serine/threonine-protein kinase PknD (930 aa).

A Protein kinase domain is found at 4–291 (YDIIRMIGKG…ALKADIEQHL (288 aa)). Residues 10 to 18 (IGKGGMGEV) and lysine 33 each bind ATP. Aspartate 138 acts as the Proton acceptor in catalysis.

It belongs to the protein kinase superfamily. Ser/Thr protein kinase family. Post-translationally, autophosphorylated on serine and threonine residues.

The enzyme catalyses L-seryl-[protein] + ATP = O-phospho-L-seryl-[protein] + ADP + H(+). It carries out the reaction L-threonyl-[protein] + ATP = O-phospho-L-threonyl-[protein] + ADP + H(+). Together with the serine/threonine kinase Pkn1, may play a role in the specific interactions with host proteins during intracellular growth. In Chlamydia caviae (strain ATCC VR-813 / DSM 19441 / 03DC25 / GPIC) (Chlamydophila caviae), this protein is Serine/threonine-protein kinase PknD.